Reading from the N-terminus, the 310-residue chain is Olfactory receptor 10G2 (310 aa).

Topologically, residues 1 to 29 (MGKTKNTSLDAVVTDFILLGLSHPPNLRS) are extracellular. Asn-6 carries N-linked (GlcNAc...) asparagine glycosylation. A helical transmembrane segment spans residues 30 to 50 (LLFLVFFIIYILTQLGNLLIL). Residues 51–58 (LTMWADPK) are Cytoplasmic-facing. Residues 59 to 80 (LCARPMYILLGVLSFLDMWLSS) traverse the membrane as a helical segment. Over 81–104 (VTVPLLILDFTPSIKAIPFGGCVA) the chain is Extracellular. The cysteines at positions 102 and 194 are disulfide-linked. The chain crosses the membrane as a helical span at residues 105 to 125 (QLYFFHFLGSTQCFLYTLMAY). The Cytoplasmic portion of the chain corresponds to 126-144 (DRYLAICQPLRYPVLMNGR). A helical membrane pass occupies residues 145–165 (LCTVLVAGAWVAGSMHGSIQA). The Extracellular segment spans residues 166–202 (TLTFRLPYCGPNQVDYFICDIPAVLRLACADTTVNEL). A helical transmembrane segment spans residues 203–222 (VTFVDVGVVAASCFMLILLS). Over 223–242 (YANIVNAILKIRTTDGRRRA) the chain is Cytoplasmic. A helical membrane pass occupies residues 243–263 (FSTCGSHLIVVTVYYVPCIFI). At 264–274 (YLRAGSKDPLD) the chain is on the extracellular side. The helical transmembrane segment at 275–295 (GAAAVFYTVVTPLLNPLIYTL) threads the bilayer. The Cytoplasmic portion of the chain corresponds to 296 to 310 (RNQEVKSALKRITAG).

It belongs to the G-protein coupled receptor 1 family.

The protein localises to the cell membrane. Odorant receptor. This Homo sapiens (Human) protein is Olfactory receptor 10G2 (OR10G2).